The following is a 503-amino-acid chain: ATP synthase subunit alpha (503 aa).

169–176 serves as a coordination point for ATP; that stretch reads GDRKTGKT.

This sequence belongs to the ATPase alpha/beta chains family. F-type ATPases have 2 components, CF(1) - the catalytic core - and CF(0) - the membrane proton channel. CF(1) has five subunits: alpha(3), beta(3), gamma(1), delta(1), epsilon(1). CF(0) has three main subunits: a(1), b(2) and c(9-12). The alpha and beta chains form an alternating ring which encloses part of the gamma chain. CF(1) is attached to CF(0) by a central stalk formed by the gamma and epsilon chains, while a peripheral stalk is formed by the delta and b chains.

It is found in the cell membrane. It carries out the reaction ATP + H2O + 4 H(+)(in) = ADP + phosphate + 5 H(+)(out). Functionally, produces ATP from ADP in the presence of a proton gradient across the membrane. The alpha chain is a regulatory subunit. The chain is ATP synthase subunit alpha from Lactobacillus delbrueckii subsp. bulgaricus (strain ATCC 11842 / DSM 20081 / BCRC 10696 / JCM 1002 / NBRC 13953 / NCIMB 11778 / NCTC 12712 / WDCM 00102 / Lb 14).